The primary structure comprises 245 residues: Orotidine 5'-phosphate decarboxylase (245 aa).

Substrate is bound by residues aspartate 22, lysine 44, 71 to 80 (DLKFHDIPNT), threonine 131, arginine 192, glutamine 201, glycine 221, and arginine 222. Lysine 73 functions as the Proton donor in the catalytic mechanism.

It belongs to the OMP decarboxylase family. Type 1 subfamily. As to quaternary structure, homodimer.

It catalyses the reaction orotidine 5'-phosphate + H(+) = UMP + CO2. The protein operates within pyrimidine metabolism; UMP biosynthesis via de novo pathway; UMP from orotate: step 2/2. Its function is as follows. Catalyzes the decarboxylation of orotidine 5'-monophosphate (OMP) to uridine 5'-monophosphate (UMP). The sequence is that of Orotidine 5'-phosphate decarboxylase from Salmonella gallinarum (strain 287/91 / NCTC 13346).